The following is an 845-amino-acid chain: MEGSSNSNSRGFNTSGVSDRNTEFLPVERLTTRSKPSSHVDEYVRSLFGSTSTHKSGEDDSLGIDPFVRSLEWGDVSLRQWLDKPERSVDVFECLHVFRQIVEIVNAAHSQGIVVHNVRPSCFVMSSFNHVSFIESASCSDSGSDSLEDGPISQKEIGSSRREEAVSKAIAIEEKGVYNKLLERKIEKLEEEKTQPFPMKHILAMETSWYTSPEEDFGSSSTCASDVYRLGVLLFELFCPVPSREEKSRTMSSLRHRVLPPQILLKCPKEASFCLWLLHPEPTCRPSMSDLLQSEFITEPRDNLEEREAAIELRDRIEEQESLLEFLLLIQQRKQESAYRLQDTVSLLSSDIEQVVKRQLILKKRGSSLSDFSKDDHQYTSGQPLMSFQANEEPSAFLASRKRVRQGILALENGVEVDEESQGSTLLESSRLMRNFKKLESVYFLTRRRQMKAAASGKSLTRHSPLSSENGRGSMIVSEKSSVSNPVAPKAFFNNDSRQGGWIDPFLEGLCRYLSFSQLRVKADLKQGDLLNSSNLVCALAFDREGELFATAGVNKKIKIFECNSIVNDNRDIHYPVVELAGRSKLSSLCWNSYIKSQIASSNFDGVVQIWDVARSQLVTEMKEHKKRVWSIDISSADPTLLASGSDDGTVKLWSINQGVSIGTIKTKANVCCVQFPSDSGRSLAFGSADHKVYYYDLRNPKIPLCTMIGHSKTVSYVKFVDSSTLVSSSTDNTLKLWDLSMSASGINESPLHSFTGHTNLKNFVGLSVSDGYIATGSETNEVFVYHKAFPMPVMSYMFNNTDSMSGLEVDDASQFISSICWRGQSSTLVAANSNGNIKILEMMT.

The span at methionine 1–aspartate 19 shows a compositional bias: polar residues. Disordered stretches follow at residues methionine 1–arginine 33 and cysteine 139–glycine 158. A Protein kinase domain is found at methionine 1–isoleucine 297. Positions arginine 301–leucine 329 form a coiled coil. 7 WD repeats span residues asparagine 532–arginine 571, alanine 581–glutamate 621, glutamate 624–threonine 664, lysine 666–cysteine 706, glycine 710–asparagine 748, glycine 757–serine 796, and aspartate 812–threonine 845. The DWD box signature appears at alanine 685–arginine 699.

Interacts with COP1 and CO.

It is found in the nucleus. Functionally, repressor of photomorphogenesis in the light. Probably part of the COP1/SPA E3 ubiquitin-protein ligase complex. This Arabidopsis thaliana (Mouse-ear cress) protein is Protein SPA1-RELATED 3 (SPA3).